The chain runs to 197 residues: 3-isopropylmalate dehydratase small subunit (197 aa).

The protein belongs to the LeuD family. LeuD type 1 subfamily. As to quaternary structure, heterodimer of LeuC and LeuD.

The enzyme catalyses (2R,3S)-3-isopropylmalate = (2S)-2-isopropylmalate. The protein operates within amino-acid biosynthesis; L-leucine biosynthesis; L-leucine from 3-methyl-2-oxobutanoate: step 2/4. Catalyzes the isomerization between 2-isopropylmalate and 3-isopropylmalate, via the formation of 2-isopropylmaleate. The sequence is that of 3-isopropylmalate dehydratase small subunit from Streptomyces griseus subsp. griseus (strain JCM 4626 / CBS 651.72 / NBRC 13350 / KCC S-0626 / ISP 5235).